Consider the following 150-residue polypeptide: D-aminoacyl-tRNA deacylase (150 aa).

The short motif at 137 to 138 (GP) is the Gly-cisPro motif, important for rejection of L-amino acids element.

It belongs to the DTD family. Homodimer.

The protein localises to the cytoplasm. It carries out the reaction glycyl-tRNA(Ala) + H2O = tRNA(Ala) + glycine + H(+). The catalysed reaction is a D-aminoacyl-tRNA + H2O = a tRNA + a D-alpha-amino acid + H(+). Its function is as follows. An aminoacyl-tRNA editing enzyme that deacylates mischarged D-aminoacyl-tRNAs. Also deacylates mischarged glycyl-tRNA(Ala), protecting cells against glycine mischarging by AlaRS. Acts via tRNA-based rather than protein-based catalysis; rejects L-amino acids rather than detecting D-amino acids in the active site. By recycling D-aminoacyl-tRNA to D-amino acids and free tRNA molecules, this enzyme counteracts the toxicity associated with the formation of D-aminoacyl-tRNA entities in vivo and helps enforce protein L-homochirality. The protein is D-aminoacyl-tRNA deacylase of Heliobacterium modesticaldum (strain ATCC 51547 / Ice1).